The following is a 1097-amino-acid chain: DNA-directed RNA polymerase subunit beta (1097 aa).

The interval 1072 to 1097 (QDVNPRRSTPSRPTYESLGVADYDED) is disordered.

This sequence belongs to the RNA polymerase beta chain family. In cyanobacteria the RNAP catalytic core is composed of 2 alpha, 1 beta, 1 beta', 1 gamma and 1 omega subunit. When a sigma factor is associated with the core the holoenzyme is formed, which can initiate transcription.

It catalyses the reaction RNA(n) + a ribonucleoside 5'-triphosphate = RNA(n+1) + diphosphate. Its function is as follows. DNA-dependent RNA polymerase catalyzes the transcription of DNA into RNA using the four ribonucleoside triphosphates as substrates. This chain is DNA-directed RNA polymerase subunit beta, found in Synechococcus sp. (strain CC9902).